We begin with the raw amino-acid sequence, 269 residues long: Tryptophan synthase alpha chain (269 aa).

Active-site proton acceptor residues include glutamate 49 and aspartate 60.

The protein belongs to the TrpA family. Tetramer of two alpha and two beta chains.

It carries out the reaction (1S,2R)-1-C-(indol-3-yl)glycerol 3-phosphate + L-serine = D-glyceraldehyde 3-phosphate + L-tryptophan + H2O. It functions in the pathway amino-acid biosynthesis; L-tryptophan biosynthesis; L-tryptophan from chorismate: step 5/5. In terms of biological role, the alpha subunit is responsible for the aldol cleavage of indoleglycerol phosphate to indole and glyceraldehyde 3-phosphate. The polypeptide is Tryptophan synthase alpha chain (Pseudomonas putida (strain ATCC 47054 / DSM 6125 / CFBP 8728 / NCIMB 11950 / KT2440)).